We begin with the raw amino-acid sequence, 193 residues long: Phosphoheptose isomerase (193 aa).

An SIS domain is found at 37 to 193; the sequence is LADSFKAGGK…MLIEKEMAKG (157 aa). A substrate-binding site is contributed by 52 to 54; that stretch reads NGG. Zn(2+) is bound by residues His-61 and Glu-65. Residues Glu-65, 93-94, 119-121, Ser-124, and Gln-172 contribute to the substrate site; these read ND and STS. Residues Gln-172 and His-180 each coordinate Zn(2+).

Belongs to the SIS family. GmhA subfamily. Homotetramer. It depends on Zn(2+) as a cofactor.

The protein resides in the cytoplasm. It carries out the reaction 2 D-sedoheptulose 7-phosphate = D-glycero-alpha-D-manno-heptose 7-phosphate + D-glycero-beta-D-manno-heptose 7-phosphate. It participates in carbohydrate biosynthesis; D-glycero-D-manno-heptose 7-phosphate biosynthesis; D-glycero-alpha-D-manno-heptose 7-phosphate and D-glycero-beta-D-manno-heptose 7-phosphate from sedoheptulose 7-phosphate: step 1/1. In terms of biological role, catalyzes the isomerization of sedoheptulose 7-phosphate in D-glycero-D-manno-heptose 7-phosphate. The sequence is that of Phosphoheptose isomerase from Klebsiella pneumoniae subsp. pneumoniae (strain ATCC 700721 / MGH 78578).